The primary structure comprises 473 residues: Glutamyl-tRNA reductase (473 aa).

Substrate-binding positions include 49 to 52, Ser109, 114 to 116, and Gln120; these read TCNR and ESQ. Cys50 acts as the Nucleophile in catalysis. Positions 196–215 are disordered; it reads LDGGGVAAEGPRHAVTPEPP. 226–231 is a binding site for NADP(+); it reads GAGAVG.

This sequence belongs to the glutamyl-tRNA reductase family. Homodimer.

The enzyme catalyses (S)-4-amino-5-oxopentanoate + tRNA(Glu) + NADP(+) = L-glutamyl-tRNA(Glu) + NADPH + H(+). The protein operates within porphyrin-containing compound metabolism; protoporphyrin-IX biosynthesis; 5-aminolevulinate from L-glutamyl-tRNA(Glu): step 1/2. Functionally, catalyzes the NADPH-dependent reduction of glutamyl-tRNA(Glu) to glutamate 1-semialdehyde (GSA). The polypeptide is Glutamyl-tRNA reductase (Frankia casuarinae (strain DSM 45818 / CECT 9043 / HFP020203 / CcI3)).